A 249-amino-acid chain; its full sequence is uncharacterized protein (249 aa).

A signal peptide spans 1–43; that stretch reads MRRGRSRPAGAAPAALLLPLLLLLPLTGCDRLAAAPAEHAAAA. The interval 40 to 59 is disordered; the sequence is AAAAGDPAQDADRGRRLPPV. Residues 68–243 form the NodB homology domain; the sequence is PVVFLTYDDG…TIEEQGLRVG (176 aa).

This is an uncharacterized protein from Streptomyces coelicolor (strain ATCC BAA-471 / A3(2) / M145).